A 291-amino-acid polypeptide reads, in one-letter code: Halorhodopsin (291 aa).

Over 1–30 (MTETLPPVTESAVALQAEVTQRELFEFVLN) the chain is Extracellular. The helical transmembrane segment at 31-56 (DPLLASSLYINIALAGLSILLFVFMT) threads the bilayer. Over 57–62 (RGLDDP) the chain is Cytoplasmic. Residues 63 to 86 (RAKLIAVSTILVPVVSIASYTGLA) form a helical membrane-spanning segment. Topologically, residues 87-120 (SGLTISVLEMPAGHFAEGSSVMLGGEEVDGVVTM) are extracellular. The helical transmembrane segment at 121–142 (WGRYLTWALSTPMILLALGLLA) threads the bilayer. Residues 143 to 145 (GSN) are Cytoplasmic-facing. Residues 146 to 169 (ATKLFTAITFDIAMCVTGLAAALT) form a helical membrane-spanning segment. Over 170 to 172 (TSS) the chain is Extracellular. The helical transmembrane segment at 173 to 195 (HLMRWFWYAISCACFLVVLYILL) threads the bilayer. Topologically, residues 196–207 (VEWAQDAKAAGT) are cytoplasmic. A helical transmembrane segment spans residues 208 to 231 (ADMFNTLKLLTVVMWLGYPIVWAL). Over 232-240 (GVEGIAVLP) the chain is Extracellular. Residues 241–269 (VGVTSWGYSFLDIVAKYIFAFLLLNYLTS) traverse the membrane as a helical segment. K256 carries the N6-(retinylidene)lysine modification. At 270-291 (NESVVSGSILDVPSASGTPADD) the chain is on the cytoplasmic side.

This sequence belongs to the archaeal/bacterial/fungal opsin family.

It is found in the cell membrane. In terms of biological role, light-driven anion pump. Binding affinity for the anions is in the order, bromide &gt; chloride &gt; nitrate &gt; azide &gt; bromate and binding is pH dependent. This Natronomonas pharaonis (Natronobacterium pharaonis) protein is Halorhodopsin (hop).